A 392-amino-acid polypeptide reads, in one-letter code: uncharacterized protein (392 aa).

Helical transmembrane passes span 2-23 (WLAN…SLYI), 38-60 (SGYV…GRFG), 73-95 (GTGI…LFFL), 153-175 (FTYT…LFGV), 195-217 (VLSY…LIQT), 237-259 (VNLA…LLAR), 272-291 (RILI…QALA), 297-319 (LLVF…TAAI), 331-353 (VLGY…GGII), and 357-379 (FTIS…MLWI).

Belongs to the major facilitator superfamily.

It localises to the cell membrane. This is an uncharacterized protein from Bacillus subtilis (strain 168).